The chain runs to 694 residues: Polyphosphate kinase (694 aa).

ATP is bound at residue Asn-45. Positions 367 and 397 each coordinate Mg(2+). The active-site Phosphohistidine intermediate is the His-427. 3 residues coordinate ATP: Tyr-460, Arg-553, and His-580.

It belongs to the polyphosphate kinase 1 (PPK1) family. The cofactor is Mg(2+). Post-translationally, an intermediate of this reaction is the autophosphorylated ppk in which a phosphate is covalently linked to a histidine residue through a N-P bond.

It carries out the reaction [phosphate](n) + ATP = [phosphate](n+1) + ADP. In terms of biological role, catalyzes the reversible transfer of the terminal phosphate of ATP to form a long-chain polyphosphate (polyP). This Campylobacter coli protein is Polyphosphate kinase.